Here is a 460-residue protein sequence, read N- to C-terminus: ATP synthase subunit beta (460 aa).

150 to 157 contributes to the ATP binding site; sequence GGAGVGKT.

This sequence belongs to the ATPase alpha/beta chains family. F-type ATPases have 2 components, CF(1) - the catalytic core - and CF(0) - the membrane proton channel. CF(1) has five subunits: alpha(3), beta(3), gamma(1), delta(1), epsilon(1). CF(0) has three main subunits: a(1), b(2) and c(9-12). The alpha and beta chains form an alternating ring which encloses part of the gamma chain. CF(1) is attached to CF(0) by a central stalk formed by the gamma and epsilon chains, while a peripheral stalk is formed by the delta and b chains.

The protein localises to the cell inner membrane. The enzyme catalyses ATP + H2O + 4 H(+)(in) = ADP + phosphate + 5 H(+)(out). Produces ATP from ADP in the presence of a proton gradient across the membrane. The catalytic sites are hosted primarily by the beta subunits. This is ATP synthase subunit beta from Sodalis glossinidius (strain morsitans).